A 327-amino-acid chain; its full sequence is Methionyl-tRNA formyltransferase (327 aa).

Serine 111–proline 114 lines the (6S)-5,6,7,8-tetrahydrofolate pocket.

It belongs to the Fmt family.

It catalyses the reaction L-methionyl-tRNA(fMet) + (6R)-10-formyltetrahydrofolate = N-formyl-L-methionyl-tRNA(fMet) + (6S)-5,6,7,8-tetrahydrofolate + H(+). Functionally, attaches a formyl group to the free amino group of methionyl-tRNA(fMet). The formyl group appears to play a dual role in the initiator identity of N-formylmethionyl-tRNA by promoting its recognition by IF2 and preventing the misappropriation of this tRNA by the elongation apparatus. In Synechococcus elongatus (strain ATCC 33912 / PCC 7942 / FACHB-805) (Anacystis nidulans R2), this protein is Methionyl-tRNA formyltransferase.